We begin with the raw amino-acid sequence, 336 residues long: MGRGKKMSKPGDGRSGDVPETCRTGGTNENHPKMNGEVVHLGQPKIYSYMSPTKSPSGRPPLQEENSVAHHESKNLGKPTTETRKKAEVEKKRISSATELSVKSSKQRETECNSIGEYFQTKQELTDVQRNTALTPVDKLQSQKMVKNKSQRRKAQRKKSPNRKLTDYYPVRRSCRKSKTELESEEKMRIDELIQTGKEDGMKMDMIIGKGRGVIATRDFQRGEFVVEYHGDLIEITDAKRREASYAQDSATGCYMYYFQYLNKTYCIDATRETGRLGRLINHSKSGNCHTKLHNISNVPHLILVASRDILVGEELLYDYGDRRKSSIEAHPWLKN.

2 disordered regions span residues M1–Q107 and Q141–L165. Residues S67–R93 are compositionally biased toward basic and acidic residues. Residues S95–S104 are compositionally biased toward polar residues. Residues V146–N162 show a composition bias toward basic residues. Residues D200 to G321 form the SET domain. Residues K210–R212, Y255, and N282–H283 contribute to the S-adenosyl-L-methionine site.

This sequence belongs to the class V-like SAM-binding methyltransferase superfamily. Histone-lysine methyltransferase family. PR/SET subfamily. In terms of processing, phosphorylated during mitosis.

The protein localises to the nucleus. It is found in the chromosome. It carries out the reaction L-lysyl(20)-[histone H4] + S-adenosyl-L-methionine = N(6)-methyl-L-lysyl(20)-[histone H4] + S-adenosyl-L-homocysteine + H(+). The catalysed reaction is L-lysyl-[protein] + S-adenosyl-L-methionine = N(6)-methyl-L-lysyl-[protein] + S-adenosyl-L-homocysteine + H(+). Functionally, protein-lysine N-methyltransferase that monomethylates both histones and non-histone proteins. Specifically monomethylates 'Lys-20' of histone H4 (H4K20me1). H4K20me1 is enriched during mitosis and represents a specific tag for epigenetic transcriptional repression. Mainly functions in euchromatin regions, thereby playing a central role in the silencing of euchromatic genes. Required for cell proliferation, probably by contributing to the maintenance of proper higher-order structure of DNA during mitosis. Involved in chromosome condensation and proper cytokinesis. The polypeptide is N-lysine methyltransferase KMT5A-B (Xenopus laevis (African clawed frog)).